The primary structure comprises 244 residues: Tabinhibitin 8 (244 aa).

Positions 1-23 (MTSILVSRFKISALTLQYATSDS) are cleaved as a signal peptide. An SCP domain is found at 67–194 (YTGGGIIVLR…KTPLFFSSNC (128 aa)). A Cell attachment site motif is present at residues 143-145 (RGD).

Belongs to the CRISP family. Expressed in salivary glands.

The protein resides in the secreted. Functionally, inhibits platelet aggregation induced by all agonists tested (ADP, arachidonic acid, the thromboxane A2 analog U46619, thrombin, and snake venom snaclecs (TMVA that activates platelet through GPIB, and stejnulxin that specifically acts through GPVI (GP6))). May act by competing with fibrinogen for binding to glycoprotein IIb/IIIa (ITGA2B/ITGB3). This Tabanus yao (Horsefly) protein is Tabinhibitin 8.